The chain runs to 122 residues: Large ribosomal subunit protein uL14 (122 aa).

Belongs to the universal ribosomal protein uL14 family. Part of the 50S ribosomal subunit. Forms a cluster with proteins L3 and L19. In the 70S ribosome, L14 and L19 interact and together make contacts with the 16S rRNA in bridges B5 and B8.

Functionally, binds to 23S rRNA. Forms part of two intersubunit bridges in the 70S ribosome. This Pseudoalteromonas translucida (strain TAC 125) protein is Large ribosomal subunit protein uL14.